The following is a 206-amino-acid chain: Probable glutathione S-transferase 6 (206 aa).

The region spanning 2-79 (VHYKLVYFPL…YLAREFGIAG (78 aa)) is the GST N-terminal domain. Residues Tyr8, Trp39, Lys43, 49-51 (GQL), and 63-64 (QS) each bind glutathione. A GST C-terminal domain is found at 81–206 (NDTEAAEVDA…YIANRPDYPF (126 aa)).

The protein belongs to the GST superfamily. Sigma family.

The enzyme catalyses RX + glutathione = an S-substituted glutathione + a halide anion + H(+). Functionally, conjugation of reduced glutathione to a wide number of exogenous and endogenous hydrophobic electrophiles. In Caenorhabditis elegans, this protein is Probable glutathione S-transferase 6 (gst-6).